Reading from the N-terminus, the 452-residue chain is cAMP-dependent protein kinase regulatory subunit (452 aa).

Residues Gln-28–Phe-212 are dimerization and phosphorylation. The tract at residues Ile-74 to Pro-163 is disordered. Positions Met-75–Phe-84 are enriched in polar residues. A compositionally biased stretch (basic and acidic residues) spans Ser-95–Glu-106. Ser-173 bears the Phosphoserine mark. Residues Leu-213–Asp-330 and Val-333–Ser-451 each bind a nucleoside 3',5'-cyclic phosphate. 3',5'-cyclic AMP contacts are provided by Glu-278, Arg-287, Glu-399, and Arg-408.

This sequence belongs to the cAMP-dependent kinase regulatory chain family. In terms of assembly, tetramer, composed of 2 regulatory (R) and 2 catalytic (C) subunits. In the presence of cAMP it dissociates into 2 active monomeric C subunits and an R dimer.

The chain is cAMP-dependent protein kinase regulatory subunit (PKAR) from Debaryomyces hansenii (strain ATCC 36239 / CBS 767 / BCRC 21394 / JCM 1990 / NBRC 0083 / IGC 2968) (Yeast).